The chain runs to 540 residues: Zinc metalloproteinase nas-10 (540 aa).

The Peptidase M12A domain maps to 293–500 (ASIFFEQNLI…VEILNKMYCK (208 aa)). 5 disulfide bridges follow: cysteine 339-cysteine 499, cysteine 365-cysteine 385, cysteine 504-cysteine 540, cysteine 511-cysteine 533, and cysteine 520-cysteine 537. Zn(2+) is bound at residue histidine 394. Residue glutamate 395 is part of the active site. Residues histidine 398 and histidine 404 each contribute to the Zn(2+) site. One can recognise a ShKT domain in the interval 504 to 540 (CDDKNVYCGAWALQDLCNNPNHNVWMRSNCRKSCNFC).

It depends on Zn(2+) as a cofactor.

Its function is as follows. Metalloprotease. This Caenorhabditis elegans protein is Zinc metalloproteinase nas-10.